An 89-amino-acid polypeptide reads, in one-letter code: MSITAERKAEVIKDNARDKGDTGSPEVQVAILTDRINTLTEHFKTHRKDNHSRRGLLMMVNKRRSLLDYLRKKDEGRYQALIAKLGLRK.

Residues 1–21 are compositionally biased toward basic and acidic residues; that stretch reads MSITAERKAEVIKDNARDKGD. Residues 1 to 26 are disordered; it reads MSITAERKAEVIKDNARDKGDTGSPE.

The protein belongs to the universal ribosomal protein uS15 family. Part of the 30S ribosomal subunit. Forms a bridge to the 50S subunit in the 70S ribosome, contacting the 23S rRNA.

One of the primary rRNA binding proteins, it binds directly to 16S rRNA where it helps nucleate assembly of the platform of the 30S subunit by binding and bridging several RNA helices of the 16S rRNA. Functionally, forms an intersubunit bridge (bridge B4) with the 23S rRNA of the 50S subunit in the ribosome. The chain is Small ribosomal subunit protein uS15 from Sphingopyxis alaskensis (strain DSM 13593 / LMG 18877 / RB2256) (Sphingomonas alaskensis).